The sequence spans 342 residues: Histidinol-phosphate aminotransferase 2 (342 aa).

K206 carries the N6-(pyridoxal phosphate)lysine modification.

It belongs to the class-II pyridoxal-phosphate-dependent aminotransferase family. Histidinol-phosphate aminotransferase subfamily. Pyridoxal 5'-phosphate is required as a cofactor.

The catalysed reaction is L-histidinol phosphate + 2-oxoglutarate = 3-(imidazol-4-yl)-2-oxopropyl phosphate + L-glutamate. It participates in amino-acid biosynthesis; L-histidine biosynthesis; L-histidine from 5-phospho-alpha-D-ribose 1-diphosphate: step 7/9. This Archaeoglobus fulgidus (strain ATCC 49558 / DSM 4304 / JCM 9628 / NBRC 100126 / VC-16) protein is Histidinol-phosphate aminotransferase 2 (hisC2).